The primary structure comprises 226 residues: UPF0758 protein gbs1168 (226 aa).

In terms of domain architecture, MPN spans 103 to 225 (QILSSEQLAR…YYSFREEADI (123 aa)). Zn(2+)-binding residues include His174, His176, and Asp187. A JAMM motif motif is present at residues 174-187 (HNHPSGSPNPSESD).

The protein belongs to the UPF0758 family.

The sequence is that of UPF0758 protein gbs1168 from Streptococcus agalactiae serotype III (strain NEM316).